A 497-amino-acid polypeptide reads, in one-letter code: tRNA (adenine(58)-N(1))-methyltransferase non-catalytic subunit TRM6 (497 aa).

The tract at residues 69–102 (TNGGSLQPKKKKEEPTSETKEAGTDNRNIIDDGK) is disordered. Residues 79–102 (KKEEPTSETKEAGTDNRNIIDDGK) are compositionally biased toward basic and acidic residues. Residues 94 to 104 (NRNIIDDGKSQ) are substrate. Thr-107 carries the phosphothreonine modification. Substrate regions lie at residues 145–154 (KYIKKKKKKY) and 175–182 (REPGKINH). The segment at 276-354 (SSEPKDIASV…EKQRRQEEQK (79 aa)) is disordered. Residues Ser-298 and Ser-305 each carry the phosphoserine modification. Residues 311–354 (ESNHPEEQERMEIVSQDPDYKEPKESGSKKDYIQEKQRRQEEQK) show a composition bias toward basic and acidic residues. Positions 349 and 377 each coordinate substrate. Substrate regions lie at residues 415 to 423 (RERGGVINL) and 434 to 441 (QVLPDRSH). A disordered region spans residues 468–497 (PSLKSSTSTLESHKTEEPAAKKRKCPESDS). Over residues 478 to 497 (ESHKTEEPAAKKRKCPESDS) the composition is skewed to basic and acidic residues.

The protein belongs to the TRM6/GCD10 family. Heterotetramer; composed of two copies of TRMT6 and two copies of TRMT61A.

It localises to the nucleus. In terms of biological role, substrate-binding subunit of tRNA (adenine-N(1)-)-methyltransferase, which catalyzes the formation of N(1)-methyladenine at position 58 (m1A58) in initiator methionyl-tRNA. Together with the TRMT61A catalytic subunit, part of a mRNA N(1)-methyltransferase complex that mediates methylation of adenosine residues at the N(1) position of a small subset of mRNAs: N(1) methylation takes place in tRNA T-loop-like structures of mRNAs and is only present at low stoichiometries. In Bos taurus (Bovine), this protein is tRNA (adenine(58)-N(1))-methyltransferase non-catalytic subunit TRM6 (TRMT6).